The chain runs to 136 residues: Translation initiation factor 5A (136 aa).

The residue at position 36 (Lys-36) is a Hypusine.

It belongs to the eIF-5A family.

Its subcellular location is the cytoplasm. Functions by promoting the formation of the first peptide bond. This is Translation initiation factor 5A (eIF5A) from Hyperthermus butylicus (strain DSM 5456 / JCM 9403 / PLM1-5).